The following is a 103-amino-acid chain: Large ribosomal subunit protein P1 (103 aa).

Positions 66 to 103 (PAAGAPAAGAAGGAVEEKKEEKKAESEDESDDDMGLFD) are disordered. Residues 80–90 (VEEKKEEKKAE) are compositionally biased toward basic and acidic residues. Over residues 91 to 103 (SEDESDDDMGLFD) the composition is skewed to acidic residues.

It belongs to the eukaryotic ribosomal protein P1/P2 family. As to quaternary structure, P1 and P2 exist as dimers at the large ribosomal subunit.

Plays an important role in the elongation step of protein synthesis. This Polyorchis penicillatus (Hydromedusa) protein is Large ribosomal subunit protein P1.